A 693-amino-acid polypeptide reads, in one-letter code: Heat shock protein homolog SSE2 (693 aa).

The disordered stretch occupies residues 653–693 (LRANQETSKMNDIAEKLAEQRRARAASDDSDDNNDENMDLD). Over residues 664–679 (DIAEKLAEQRRARAAS) the composition is skewed to basic and acidic residues. Residues 680–693 (DDSDDNNDENMDLD) are compositionally biased toward acidic residues.

It belongs to the heat shock protein 70 family.

Has a calcium-dependent calmodulin-binding activity. The polypeptide is Heat shock protein homolog SSE2 (SSE2) (Saccharomyces cerevisiae (strain ATCC 204508 / S288c) (Baker's yeast)).